The sequence spans 696 residues: Serotransferrin (696 aa).

Transferrin-like domains are found at residues 6–332 and 346–672; these read VRWC…NLRE and VRWC…NLRK. 2 cysteine pairs are disulfide-bonded: Cys-9–Cys-47 and Cys-19–Cys-38. At Arg-23 the chain carries Dimethylated arginine. An N-linked (GlcNAc...) asparagine glycan is attached at Asn-25. The Fe(3+) site is built by Asp-62 and Tyr-94. Disulfide bonds link Cys-117/Cys-198, Cys-157/Cys-173, Cys-160/Cys-181, Cys-170/Cys-183, and Cys-231/Cys-245. Residues Thr-119, Arg-123, Ala-125, and Gly-126 each coordinate hydrogencarbonate. Tyr-192 is a binding site for Fe(3+). His-253 lines the Fe(3+) pocket. 11 disulfides stabilise this stretch: Cys-343–Cys-605, Cys-349–Cys-381, Cys-359–Cys-372, Cys-406–Cys-682, Cys-423–Cys-646, Cys-456–Cys-532, Cys-480–Cys-673, Cys-490–Cys-504, Cys-501–Cys-515, Cys-572–Cys-586, and Cys-624–Cys-629. The residue at position 374 (Ser-374) is a Phosphoserine. Residues Asp-396 and Tyr-431 each contribute to the Fe(3+) site. Thr-458, Arg-462, Ala-464, and Gly-465 together coordinate hydrogencarbonate. Asn-497 carries an N-linked (GlcNAc...) asparagine glycan. A Fe(3+)-binding site is contributed by Tyr-526. His-594 lines the Fe(3+) pocket. Ser-674 carries the post-translational modification Phosphoserine.

The protein belongs to the transferrin family. Monomer. Part of a complex composed of SLC40A1/ferroportin, TF/transferrin and HEPH/hephaestin that transfers iron from cells to transferrin. Expressed by the liver and secreted in plasma.

Its subcellular location is the secreted. In terms of biological role, transferrins are iron binding transport proteins which can bind two Fe(3+) ions in association with the binding of an anion, usually bicarbonate. It is responsible for the transport of iron from sites of absorption and heme degradation to those of storage and utilization. Serum transferrin may also have a further role in stimulating cell proliferation. This Sus scrofa (Pig) protein is Serotransferrin (TF).